A 732-amino-acid chain; its full sequence is DNA gyrase subunit B, mitochondrial (732 aa).

Positions 513–620 (SEIFIVEGDS…RYQRALFDAG (108 aa)) constitute a Toprim domain. 3 residues coordinate Mg(2+): Glu-519, Asp-593, and Asp-595.

The protein belongs to the type II topoisomerase GyrB family. As to quaternary structure, made up of two chains. The A chain is responsible for DNA breakage and rejoining; the B chain catalyzes ATP hydrolysis. Mg(2+) serves as cofactor. Mn(2+) is required as a cofactor. The cofactor is Ca(2+).

The protein localises to the mitochondrion. It carries out the reaction ATP-dependent breakage, passage and rejoining of double-stranded DNA.. A type II topoisomerase that negatively supercoils closed circular double-stranded DNA in an ATP-dependent manner. In Arabidopsis thaliana (Mouse-ear cress), this protein is DNA gyrase subunit B, mitochondrial (GYRBM).